A 1224-amino-acid polypeptide reads, in one-letter code: Period circadian protein (1224 aa).

Residues 1–15 are compositionally biased toward polar residues; it reads MEGGESTESTHNTKV. Residues 1–175 are disordered; that stretch reads MEGGESTEST…AAQSFPIPSP (175 aa). Low complexity predominate over residues 16-47; that stretch reads SDSAYSNSCSNSQSQRSGSSKSRLSGSHSSGS. The Nuclear localization signal motif lies at 66–79; it reads KRNKDKSRKKKKNK. The segment covering 66–79 has biased composition (basic residues); it reads KRNKDKSRKKKKNK. Residues 121-133 show a composition bias toward basic and acidic residues; the sequence is ELQDQQHGEDHSE. 2 PAS domains span residues 238 to 373 and 391 to 497; these read DSFC…ATPI and FAIR…RVFQ. 5 disordered regions span residues 632–764, 788–807, 874–927, 978–1008, and 1094–1224; these read VTAP…GTAA, KKHRESRGRTGEKSKKSAND, GGSG…GPSS, TPTSPTRSPRMHKHPHKGGTDMPTTSQQAAA, and TPAQ…HGDG. Residues 675 to 693 show a composition bias toward polar residues; that stretch reads NFTTASNIHMSSVTNTSIA. Tandem repeats lie at residues 694-695, 697-698, 699-700, 701-702, 703-704, 705-706, 707-708, 709-710, 711-712, 713-714, 715-716, 717-718, 719-720, 721-722, 723-724, 725-726, 727-728, 729-730, 731-732, 733-734, 735-736, 737-738, 739-740, 741-742, 743-744, and 745-746. Residues 694–752 show a composition bias toward gly residues; sequence GTGGTGTGTGTGTGTGTGTGTGTGTGTGTGTGTGTGTGTGTGTGTGTGTGNGTNSGTGT. Residues 694-754 are 30 X 2 AA approximate tandem repeats of G-[TN]; it reads GTGGTGTGTG…GTNSGTGTGT (61 aa). One copy of the 27; approximate repeat lies at 747 to 748; that stretch reads NS. Repeat copies occupy residues 749–750, 751–752, and 753–754. Positions 749 to 868 are regulates the rhythm of species-specific courtship song; it reads GTGTGTASSS…GTGGVGSGGA (120 aa). Basic and acidic residues predominate over residues 794-805; it reads RGRTGEKSKKSA. Over residues 895 to 907 the composition is skewed to gly residues; it reads GTPGGAGGGGGAG. A compositionally biased stretch (low complexity) spans 908–927; it reads AAAAAGASSSVGSSTPGPSS. Composition is skewed to polar residues over residues 1094 to 1117 and 1143 to 1154; these read TPAQVQRPSSQSASVKTEPGSSAA and PPCSSSNPANNK. The span at 1158–1177 shows a compositional bias: low complexity; sequence DSNGNSDDMDGSSFSSFYSS. Basic and acidic residues predominate over residues 1209–1224; it reads KIMEHPEEDQTQHGDG.

As to quaternary structure, forms a heterodimer with timeless (TIM); the complex then translocates into the nucleus. A proportion of the protein exists as homodimer. In terms of processing, phosphorylated with a circadian rhythmicity, probably by the double-time protein (dbt). Phosphorylation could be implicated in the stability of per monomer and in the formation of heterodimer per-tim. In terms of tissue distribution, expressed in neural tissues and in several nonneural tissues of the abdomen. Malpighian tubules contain a circadian pacemaker that functions independently of the brain. Expression oscillates in all tissues studied except for the ovary. PER-A isoforms are mainly expressed in adult's head.

It localises to the nucleus. Its subcellular location is the cytoplasm. The protein resides in the perinuclear region. It is found in the cytosol. Functionally, essential for biological clock functions. Determines the period length of circadian and ultradian rhythms; an increase in PER dosage leads to shortened circadian rhythms and a decrease leads to lengthened circadian rhythms. Essential for the circadian rhythmicity of locomotor activity, eclosion behavior, and for the rhythmic component of the male courtship song that originates in the thoracic nervous system. The biological cycle depends on the rhythmic formation and nuclear localization of the TIM-PER complex. Light induces the degradation of TIM, which promotes elimination of PER. Nuclear activity of the heterodimer coordinatively regulates PER and TIM transcription through a negative feedback loop. Behaves as a negative element in circadian transcriptional loop. Does not appear to bind DNA, suggesting indirect transcriptional inhibition. Required for binding of cwo to the E box regions in the promoters of target genes of the transcriptional activator Clock, probably by binding to Clock-cycle heterodimers, reducing their affinity for E box binding and allowing cwo to bind instead. The chain is Period circadian protein (per) from Drosophila melanogaster (Fruit fly).